The following is a 328-amino-acid chain: Malate dehydrogenase (328 aa).

Residue 11–17 (GAAGQIG) coordinates NAD(+). The substrate site is built by R94 and R100. NAD(+) is bound by residues N107, Q114, and 131–133 (VGN). Residues N133 and R164 each contribute to the substrate site. The active-site Proton acceptor is H189.

The protein belongs to the LDH/MDH superfamily. MDH type 2 family.

The catalysed reaction is (S)-malate + NAD(+) = oxaloacetate + NADH + H(+). In terms of biological role, catalyzes the reversible oxidation of malate to oxaloacetate. This Xanthomonas campestris pv. campestris (strain B100) protein is Malate dehydrogenase.